The sequence spans 54 residues: UPF0434 protein BCI_0256 (54 aa).

The protein belongs to the UPF0434 family.

This chain is UPF0434 protein BCI_0256, found in Baumannia cicadellinicola subsp. Homalodisca coagulata.